Here is a 231-residue protein sequence, read N- to C-terminus: Orotidine 5'-phosphate decarboxylase (231 aa).

Substrate contacts are provided by residues Asp-11, Lys-33, 60-69 (DLKFHDIPNT), Thr-120, Arg-181, Gln-190, Gly-210, and Arg-211. Lys-62 acts as the Proton donor in catalysis.

It belongs to the OMP decarboxylase family. Type 1 subfamily. As to quaternary structure, homodimer.

It catalyses the reaction orotidine 5'-phosphate + H(+) = UMP + CO2. It participates in pyrimidine metabolism; UMP biosynthesis via de novo pathway; UMP from orotate: step 2/2. Catalyzes the decarboxylation of orotidine 5'-monophosphate (OMP) to uridine 5'-monophosphate (UMP). This is Orotidine 5'-phosphate decarboxylase from Vibrio cholerae serotype O1 (strain ATCC 39315 / El Tor Inaba N16961).